The sequence spans 503 residues: GMP synthase [glutamine-hydrolyzing] (503 aa).

Residues 1–189 enclose the Glutamine amidotransferase type-1 domain; it reads MVLVLDFGSQ…FLELAGVKRD (189 aa). The active-site Nucleophile is cysteine 78. Residues histidine 164 and glutamate 166 contribute to the active site. Residues 190-378 form the GMPS ATP-PPase domain; the sequence is WTPEHVLEEL…LGLPDTLRLR (189 aa). 217-223 is a binding site for ATP; the sequence is SGGVDSS.

As to quaternary structure, homodimer.

The catalysed reaction is XMP + L-glutamine + ATP + H2O = GMP + L-glutamate + AMP + diphosphate + 2 H(+). It functions in the pathway purine metabolism; GMP biosynthesis; GMP from XMP (L-Gln route): step 1/1. In terms of biological role, catalyzes the synthesis of GMP from XMP. This chain is GMP synthase [glutamine-hydrolyzing], found in Thermus thermophilus (strain ATCC 27634 / DSM 579 / HB8).